Consider the following 448-residue polypeptide: MASDKQKAERAEVAARLAAEDLHDINKSGGADVTMYKVTERTTEHPPEQDRPGVIGSVFRAVQGTYEHARDAVVGKTHEAAESTKEGAQIASEKAVGAKDATVEKAKETADYTAEKVGEYKDYTVDKAKEAKDTTAEKAKETANYTADKAVEAKDKTAEKIGEYKDYAVDKAVEAKDKTAEKAKETANYTADKAKEAKDKTAEKVGEYKDYTVDKAVEARDYTAEKAIEAKDKTAEKTGEYKDYTVEKATEGKDVTVSKLGELKDSAVETAKRAMGFLSGKTEEAKGKAVETKDTAKENMEKAGEVTRQKMEEMRLEGKELKEEAGAKAQEASQKTRESTESGAQKAEETKDSAAVRGNEAKGTIFGALGNVTEAIKSKLTMPSDIVEETRAAREHGGTGRTVVEVKVEDSKPGKVATSLKASDQMTGQTFNDVGRMDDDARKDKGKL.

Basic and acidic residues-rich tracts occupy residues 282–326 (TEEA…EEAG) and 334–354 (QKTR…KDSA). Disordered stretches follow at residues 282–360 (TEEA…RGNE) and 411–448 (SKPG…KGKL). Residues 297–331 (KENMEKAGEVTRQKMEEMRLEGKELKEEAGAKAQE) are a coiled coil. Positions 420-432 (LKASDQMTGQTFN) are enriched in polar residues. The segment covering 435–448 (GRMDDDARKDKGKL) has biased composition (basic and acidic residues).

Belongs to the LEA type 4 family. In terms of tissue distribution, expressed in mature seeds.

May be involved in the BHLH109-mediated regulation of somatic embryogenesis. The protein is Late embryogenesis abundant protein ECP63 of Arabidopsis thaliana (Mouse-ear cress).